The following is a 387-amino-acid chain: Postreplication repair E3 ubiquitin-protein ligase rad18 (387 aa).

The segment at 29-67 (CLICHEYFRAPLITSCSHTFCSFCIRDYLREHPMCPACR) adopts an RING-type zinc-finger fold. The interval 119–153 (DSASGDEEWEDDLASNSSPASIAKKTSRDSKKRKR) is disordered. Residues 122 to 131 (SGDEEWEDDL) show a composition bias toward acidic residues. The UBZ4-type zinc-finger motif lies at 156-183 (LVHCPACSNLVPHNQINQHLDSCLNSPS). Zn(2+)-binding residues include Cys159, Cys162, His174, and Cys178. The segment at 174 to 206 (HLDSCLNSPSSPSSSSSPYKNKDNSKSNSLLSF) is disordered. Residues 177–192 (SCLNSPSSPSSSSSPY) show a composition bias toward low complexity. Residues 240-274 (YALLSESKIRSKLSEMGLPTDGHKQLLQRRHAKWV) form the SAP domain. Positions 335–387 (KQSTTNKNDSLRNTAVESSTEPSTSNGFPATSVSPPLTIDLTNSQTGSDGPQS) are disordered.

The protein belongs to the RAD18 family. Interacts with E2 ubc2, forming a complex with ubiquitin ligase activity.

The protein localises to the nucleus. The catalysed reaction is S-ubiquitinyl-[E2 ubiquitin-conjugating enzyme]-L-cysteine + [acceptor protein]-L-lysine = [E2 ubiquitin-conjugating enzyme]-L-cysteine + N(6)-ubiquitinyl-[acceptor protein]-L-lysine.. The protein operates within protein modification; protein ubiquitination. Functionally, E3 RING-finger protein, member of the UBC2/RAD6 epistasis group. Associates to the E2 ubiquitin conjugating enzyme ubc2/rad6 to form the ubc2-rad18 ubiquitin ligase complex involved in postreplicative repair (PRR) of damaged DNA. This chain is Postreplication repair E3 ubiquitin-protein ligase rad18 (rhp18), found in Schizosaccharomyces pombe (strain 972 / ATCC 24843) (Fission yeast).